Reading from the N-terminus, the 83-residue chain is uncharacterized protein (83 aa).

This is an uncharacterized protein from Synechocystis sp. (strain ATCC 27184 / PCC 6803 / Kazusa).